Here is a 414-residue protein sequence, read N- to C-terminus: F-box protein At3g26010 (414 aa).

Residues 5 to 52 (NRTIHLTDAIWTEILARLPLRIIARFKSVSKTWKSTIESVYFRRLFVS) form the F-box domain.

This is F-box protein At3g26010 from Arabidopsis thaliana (Mouse-ear cress).